The sequence spans 191 residues: Nascent polypeptide-associated complex subunit alpha (191 aa).

The NAC-A/B domain maps to 24-89 (SRPERKARKA…AKVEDPNSAA (66 aa)). The segment at 126–149 (QDAPSADSSAPAPSGEATDASASG) is disordered. The segment covering 127–139 (DAPSADSSAPAPS) has biased composition (low complexity). Residues 153-191 (VSDEEIQLIVAQTGVDEAKAREAYISEKGDLINAIMKLQ) enclose the UBA domain.

Belongs to the NAC-alpha family. Part of the nascent polypeptide-associated complex (NAC), consisting of EGD2 and EGD1. NAC associates with ribosomes via EGD1.

Its subcellular location is the cytoplasm. The protein localises to the nucleus. In terms of biological role, component of the nascent polypeptide-associated complex (NAC), a dynamic component of the ribosomal exit tunnel, protecting the emerging polypeptides from interaction with other cytoplasmic proteins to ensure appropriate nascent protein targeting. The NAC complex also promotes mitochondrial protein import by enhancing productive ribosome interactions with the outer mitochondrial membrane and blocks the inappropriate interaction of ribosomes translating non-secretory nascent polypeptides with translocation sites in the membrane of the endoplasmic reticulum. EGD2 may also be involved in transcription regulation. The polypeptide is Nascent polypeptide-associated complex subunit alpha (EGD2) (Cryptococcus neoformans var. neoformans serotype D (strain B-3501A) (Filobasidiella neoformans)).